Reading from the N-terminus, the 618-residue chain is Keratin, type I cytoskeletal 9 (618 aa).

The tract at residues 1–49 (MSFRQISSSFRSSSGSSCGGGGGRGASRGSMRSSFGRSSRAGGESRFGS) is disordered. The head stretch occupies residues 1-137 (MSFRQISSSF…GGEGSILNTN (137 aa)). Low complexity predominate over residues 7 to 16 (SSSFRSSSGS). 2 positions are modified to phosphoserine: Ser14 and Ser17. Positions 17–26 (SCGGGGGRGA) are enriched in gly residues. Low complexity predominate over residues 27–49 (SRGSMRSSFGRSSRAGGESRFGS). A coil 1A region spans residues 138–173 (EKVVMQNLNSRLASYMDKVQELEEDNANLEKQIQEW). An IF rod domain is found at 138-450 (EKVVMQNLNS…KLLEGGQQDF (313 aa)). Positions 174 to 192 (YSRKGNRVFQKDYSHYYNT) are linker 1. The tract at residues 193 to 284 (IEDLKDRIVD…KSHKEEMNQL (92 aa)) is coil 1B. The segment at 285 to 307 (TGLNDGDVNVEINVAPSTDLTQV) is linker 12. Residues 308-446 (LNDMREEYEH…ETYRKLLEGG (139 aa)) are coil 2. The tail stretch occupies residues 447–609 (QQDFESSGAG…GGGNTRPSQS (163 aa)). The segment at 449–618 (DFESSGAGQI…SQSSQIPRLR (170 aa)) is disordered. Positions 456–603 (GQIGFGSGKG…GSGGSYGGGN (148 aa)) are enriched in gly residues. Positions 607 to 618 (SQSQSSQIPRLR) are enriched in low complexity.

It belongs to the intermediate filament family. In terms of assembly, heterotetramer of two type I and two type II keratins. In terms of tissue distribution, expressed in the perinuclear ring of spermatid manchettes within testis and in keratinocytes of the suprabasal layer of footpad epidermis (at protein level).

In terms of biological role, may serve an important special function either in the mature palmar and plantar skin tissue or in the morphogenetic program of the formation of these tissues. Plays a role in keratin filament assembly. May be involved in spermatid nuclear shaping and sperm development. The sequence is that of Keratin, type I cytoskeletal 9 (Krt9) from Rattus norvegicus (Rat).